Consider the following 335-residue polypeptide: Fructose-1,6-bisphosphatase class 1 (335 aa).

Residues glutamate 92, aspartate 114, leucine 116, and aspartate 117 each contribute to the Mg(2+) site. Residues 117–120 (DGSS) and asparagine 209 contribute to the substrate site. Glutamate 281 is a Mg(2+) binding site.

This sequence belongs to the FBPase class 1 family. In terms of assembly, homotetramer. Mg(2+) serves as cofactor.

It localises to the cytoplasm. The enzyme catalyses beta-D-fructose 1,6-bisphosphate + H2O = beta-D-fructose 6-phosphate + phosphate. It participates in carbohydrate biosynthesis; gluconeogenesis. This Nitrosococcus oceani (strain ATCC 19707 / BCRC 17464 / JCM 30415 / NCIMB 11848 / C-107) protein is Fructose-1,6-bisphosphatase class 1.